We begin with the raw amino-acid sequence, 409 residues long: Failed axon connections homolog (409 aa).

A helical membrane pass occupies residues 68 to 88; that stretch reads YLTGGALLAAAAYLLHELLVI. Residues 372–393 form a disordered region; that stretch reads DEGAENSFSRTPDTDFTGHSLF.

The protein belongs to the FAX family.

It localises to the membrane. Its function is as follows. May play a role in axonal development. The protein is Failed axon connections homolog (Faxc) of Mus musculus (Mouse).